The chain runs to 307 residues: UDP-N-acetylenolpyruvoylglucosamine reductase (307 aa).

In terms of domain architecture, FAD-binding PCMH-type spans 33–197; sequence TGGNADFYIT…LEAAFTLAPG (165 aa). The active site involves arginine 176. The Proton donor role is filled by serine 226. Glutamate 296 is a catalytic residue.

This sequence belongs to the MurB family. FAD is required as a cofactor.

Its subcellular location is the cytoplasm. It carries out the reaction UDP-N-acetyl-alpha-D-muramate + NADP(+) = UDP-N-acetyl-3-O-(1-carboxyvinyl)-alpha-D-glucosamine + NADPH + H(+). The protein operates within cell wall biogenesis; peptidoglycan biosynthesis. Cell wall formation. The sequence is that of UDP-N-acetylenolpyruvoylglucosamine reductase from Staphylococcus aureus (strain NCTC 8325 / PS 47).